Consider the following 73-residue polypeptide: Antimicrobial peptide lumbricin-PG (73 aa).

Positions 1 to 14 are cleaved as a signal peptide; it reads MLLTISDFLFLSLT. Residues 25–48 form a disordered region; sequence RPWSDRKNNYSGPQFTYPPEKAPP.

Its subcellular location is the secreted. Displays antimicrobial activity against the Gram-positive bacterium S.aureus ATCC 2592, the Gram-negative bacteria E.coli ATCC 25922 and P.aeruginosa ATCC 27853, and the fungus C.albicans ATCC 2002. Displays stronger activity against P.aeruginosa and S.aureus than E.coli. Displays very weak hemolytic activity. This chain is Antimicrobial peptide lumbricin-PG, found in Metaphire guillelmi (Earthworm).